The sequence spans 837 residues: Periplasmic nitrate reductase (837 aa).

Positions 1 to 31 form a signal peptide, tat-type signal; the sequence is MKLNRRDFIKANAAAAAISAAGLSVPGAAVA. A 4Fe-4S Mo/W bis-MGD-type domain is found at 37–93; that stretch reads IRWDKAACRFCGTGCGVLVGTQDGRVVATQGDPDAPVNRGLNCIKGYFLSKIMYGAD. Residues Cys-44, Cys-47, Cys-51, and Cys-79 each coordinate [4Fe-4S] cluster. Residues Lys-81, Gln-148, Asn-173, Cys-177, 210–217, 241–245, and 260–262 each bind Mo-bis(molybdopterin guanine dinucleotide); these read WGSNMAEM, STFEH, and QTD. The disordered stretch occupies residues 308–329; sequence EKNATSNGYPDADGKPKGDTGK. Positions 319 to 329 are enriched in basic and acidic residues; it reads ADGKPKGDTGK. Residues Met-381, Gln-385, Asn-491, 517–518, Lys-540, Asp-567, and 727–736 each bind Mo-bis(molybdopterin guanine dinucleotide); these read SD and TGRVLEHWHT. Residue Phe-803 participates in substrate binding. The Mo-bis(molybdopterin guanine dinucleotide) site is built by Asn-811 and Lys-828.

Belongs to the prokaryotic molybdopterin-containing oxidoreductase family. NasA/NapA/NarB subfamily. Component of the periplasmic nitrate reductase NapAB complex composed of NapA and NapB. It depends on [4Fe-4S] cluster as a cofactor. Requires Mo-bis(molybdopterin guanine dinucleotide) as cofactor. Post-translationally, predicted to be exported by the Tat system. The position of the signal peptide cleavage has not been experimentally proven.

It is found in the periplasm. The enzyme catalyses 2 Fe(II)-[cytochrome] + nitrate + 2 H(+) = 2 Fe(III)-[cytochrome] + nitrite + H2O. Its function is as follows. Catalytic subunit of the periplasmic nitrate reductase complex NapAB. Receives electrons from NapB and catalyzes the reduction of nitrate to nitrite. The sequence is that of Periplasmic nitrate reductase from Dechloromonas aromatica (strain RCB).